The primary structure comprises 57 residues: Protein new-glue 4 (57 aa).

An N-terminal signal peptide occupies residues 1–16 (MEWKLLLIVLPWLLVC).

It localises to the secreted. The polypeptide is Protein new-glue 4 (ng4) (Drosophila melanogaster (Fruit fly)).